A 274-amino-acid polypeptide reads, in one-letter code: DNA repair protein Rad1 (274 aa).

This sequence belongs to the rad1 family. Component of the 9-1-1 checkpoint clamp complex consisting of Rad9 isoform A, Rad1 and Hus1-like; the interaction with Hus1-like is direct. Does not interact directly with Rad9; this interaction is probably mediated by Hus1-like. This complex probably also forms with Rad9 isoform B, however 9-1-1 complex containing Rad9 isoform A localizes to the nuclear periphery. In terms of tissue distribution, expressed in ovary.

The protein resides in the cytoplasm. It localises to the nucleus. The protein localises to the nucleus envelope. This chain is DNA repair protein Rad1, found in Drosophila melanogaster (Fruit fly).